The primary structure comprises 200 residues: Translation machinery-associated protein 22 (200 aa).

The SUI1 domain occupies 95-166; the sequence is VVIRREARTK…EVEAYIHSLL (72 aa).

It belongs to the DENR family. In terms of assembly, interacts with the 40S ribosomal subunit.

It localises to the cytoplasm. The chain is Translation machinery-associated protein 22 (TMA22) from Kluyveromyces lactis (strain ATCC 8585 / CBS 2359 / DSM 70799 / NBRC 1267 / NRRL Y-1140 / WM37) (Yeast).